A 1397-amino-acid chain; its full sequence is Probable cyclin-dependent serine/threonine-protein kinase DDB_G0292550 (1397 aa).

A Protein kinase domain is found at 4 to 287; that stretch reads FQIIELIGSG…TKEALNHPWF (284 aa). Residues 10–18 and lysine 33 each bind ATP; that span reads IGSGSYGKV. Catalysis depends on aspartate 124, which acts as the Proton acceptor. Disordered stretches follow at residues 412–567, 671–728, 763–831, 845–949, 996–1101, 1115–1174, 1227–1324, and 1340–1397; these read NNNN…NNNN, PLSI…NNGF, NEMG…NGNN, NNNN…YANH, NGLA…NTHN, NNGF…NSPV, NSAS…SFGL, and KKKK…IVLD. A compositionally biased stretch (low complexity) spans 676 to 715; that stretch reads SQHHNTSSSDTHNNNNNNYNNNNNNNNNINNNNINSIHNQ. 4 stretches are compositionally biased toward low complexity: residues 845-941, 1012-1021, 1028-1101, and 1115-1155; these read NNNN…NGNG, NSNNNNSGNN, NTFN…NTHN, and NNGF…TKNN. Over residues 1156-1171 the composition is skewed to polar residues; the sequence is TQFGPNILSSTQTSHN. Composition is skewed to low complexity over residues 1253-1321 and 1354-1380; these read NNNN…NNNS and SSSQ…SQTQ.

This sequence belongs to the protein kinase superfamily. CMGC Ser/Thr protein kinase family. CDC2/CDKX subfamily.

The enzyme catalyses L-seryl-[protein] + ATP = O-phospho-L-seryl-[protein] + ADP + H(+). It catalyses the reaction L-threonyl-[protein] + ATP = O-phospho-L-threonyl-[protein] + ADP + H(+). The protein is Probable cyclin-dependent serine/threonine-protein kinase DDB_G0292550 of Dictyostelium discoideum (Social amoeba).